We begin with the raw amino-acid sequence, 118 residues long: NADH-quinone oxidoreductase subunit A (118 aa).

Transmembrane regions (helical) follow at residues 6–26, 64–84, and 87–107; these read LPVL…LLMG, AILF…AVVF, and IGMT…VGFI.

It belongs to the complex I subunit 3 family. NDH-1 is composed of 14 different subunits. Subunits NuoA, H, J, K, L, M, N constitute the membrane sector of the complex.

Its subcellular location is the cell inner membrane. The enzyme catalyses a quinone + NADH + 5 H(+)(in) = a quinol + NAD(+) + 4 H(+)(out). Functionally, NDH-1 shuttles electrons from NADH, via FMN and iron-sulfur (Fe-S) centers, to quinones in the respiratory chain. The immediate electron acceptor for the enzyme in this species is believed to be ubiquinone. Couples the redox reaction to proton translocation (for every two electrons transferred, four hydrogen ions are translocated across the cytoplasmic membrane), and thus conserves the redox energy in a proton gradient. The protein is NADH-quinone oxidoreductase subunit A of Acidithiobacillus ferrooxidans (strain ATCC 53993 / BNL-5-31) (Leptospirillum ferrooxidans (ATCC 53993)).